A 164-amino-acid polypeptide reads, in one-letter code: MHCPFCRHEDSRVVDSRSLDDGSAIRRRRQCQACGKRFTTMETTALTVVKRSGVAEPFDRSKVINGVRKACQGRPVTSDDLAMLAQEVEETVRATGNAEVDAHDVGLAILDPLRRLDQVAFLRFASVYRDFESLDDFEEAIAELRAGDGDDRGRPAVQPRLFTR.

The segment at 3-34 is a zinc-finger region; the sequence is CPFCRHEDSRVVDSRSLDDGSAIRRRRQCQAC. Residues 46-136 enclose the ATP-cone domain; the sequence is LTVVKRSGVA…VYRDFESLDD (91 aa).

Belongs to the NrdR family. Requires Zn(2+) as cofactor.

Its function is as follows. Negatively regulates transcription of bacterial ribonucleotide reductase nrd genes and operons by binding to NrdR-boxes. This is Transcriptional repressor NrdR from Micrococcus luteus (strain ATCC 4698 / DSM 20030 / JCM 1464 / CCM 169 / CCUG 5858 / IAM 1056 / NBRC 3333 / NCIMB 9278 / NCTC 2665 / VKM Ac-2230) (Micrococcus lysodeikticus).